The primary structure comprises 352 residues: Diacylglycerol acyltransferase/mycolyltransferase Ag85C (352 aa).

A signal peptide spans Met-1–Ala-37. Leu-86 to Arg-87 contacts substrate. Positions Phe-102–Val-112 are fibronectin-binding. Residues Ser-170 and Asn-198 each coordinate substrate. Ser-170 serves as the catalytic Nucleophile. Residue Glu-274 is part of the active site. Substrate contacts are provided by residues Leu-276–Arg-279 and His-306–Trp-308. Residue His-306 is part of the active site. The segment at Thr-332 to Thr-352 is disordered. The span at Ala-333–Thr-352 shows a compositional bias: low complexity.

This sequence belongs to the mycobacterial A85 antigen family. Homodimer.

Its subcellular location is the secreted. It catalyses the reaction an acyl-CoA + a 1,2-diacyl-sn-glycerol = a triacyl-sn-glycerol + CoA. The enzyme catalyses 2 alpha,alpha'-trehalose 6-mycolate = alpha,alpha'-trehalose 6,6'-bismycolate + alpha,alpha-trehalose. In terms of biological role, the antigen 85 proteins (FbpA, FbpB, FbpC) are responsible for the high affinity of mycobacteria to fibronectin, a large adhesive glycoprotein, which facilitates the attachment of M.tuberculosis to murine alveolar macrophages (AMs). They also help to maintain the integrity of the cell wall by catalyzing the transfer of mycolic acids to cell wall arabinogalactan and through the synthesis of alpha,alpha-trehalose dimycolate (TDM, cord factor). They catalyze the transfer of a mycoloyl residue from one molecule of alpha,alpha-trehalose monomycolate (TMM) to another TMM, leading to the formation of TDM. The protein is Diacylglycerol acyltransferase/mycolyltransferase Ag85C (fbpC) of Mycobacterium avium.